The sequence spans 340 residues: Cytochrome P450 monooxygenase cheG (340 aa).

An N-linked (GlcNAc...) asparagine glycan is attached at asparagine 25. Residues 37–57 traverse the membrane as a helical segment; it reads MLLGIPTVILSLTPAVLRLLI. Cysteine 283 is a heme binding site. Residues 308 to 340 form a disordered region; the sequence is LPPGQGKPEKGSMPNGSMSPDTKAKVLFRSRKL. Residue asparagine 322 is glycosylated (N-linked (GlcNAc...) asparagine).

It belongs to the cytochrome P450 family. Requires heme as cofactor.

Its subcellular location is the membrane. Its pathway is secondary metabolite biosynthesis. In terms of biological role, cytochrome P450 monooxygenase; part of the gene cluster that mediates the biosynthesis of chaetoglobosin A which has a unique inhibitory activity against actin polymerization in mammalian cells. Chaetoglobosin A and its intermediates are involved in the morphological differentiation of C.globosum. The first step of the pathway is the synthesis of prochaetoglobosin I via condensation of one acetyl-CoA, 8 malonyl-CoA, and a L-tryptophan molecule by the PKS-NRPS hybrid synthetase cheA, followed by reduction of backbone double bond to install desired geometry by the enoyl reductase cheB. Further multiple oxidation steps performed by the cytochrome P450 monooxygenases cheE and cheG, as well as by the FAD-linked oxidoreductase cheF, lead to the formation of chaetoglobosin A. Depending on the order of action of these reductases, distinct intermediates can be identified. Within the pathway, the cytochrome P450 monooxygenase cheE catalyzes a stereospecific epoxidation on prochaetoglobosin I, cytoglobosin D, and chaetoglobosin J intermediates. The FAD-linked oxidoreductase cheF performs dehydrogenation of the C-20 hydroxyl groups in the 20-dihyrochaetoglobosin A and cytoglobosin D intermediates. Finally, the cytochrome P450 monooxygenase cheG can catalyze the stereospecific dihydroxylation of prochaetoglobosin I and prochaetoglobosin IV at C-19 and C-20, respectively. The Diels-Alderase cheD may play a role in the post-PKS-NRPS biosynthetic steps catalyzing Diels-Alder cyclization. This is Cytochrome P450 monooxygenase cheG from Chaetomium globosum (strain ATCC 6205 / CBS 148.51 / DSM 1962 / NBRC 6347 / NRRL 1970) (Soil fungus).